The primary structure comprises 389 residues: Urotensin-2 receptor (389 aa).

Polar residues-rich tracts occupy residues 1-10 and 28-39; these read MALTPESPSS and PNATLNSSWASP. Residues 1–39 are disordered; sequence MALTPESPSSFPGLAAIGSSVPEPPGSPNATLNSSWASP. Topologically, residues 1 to 54 are extracellular; the sequence is MALTPESPSSFPGLAAIGSSVPEPPGSPNATLNSSWASPTEPSSLEDLVATGAI. N-linked (GlcNAc...) asparagine glycosylation is found at asparagine 29 and asparagine 33. A helical transmembrane segment spans residues 55-77; sequence GTLLSAMGVVGVVGNAYTLVVTC. At 78 to 87 the chain is on the cytoplasmic side; that stretch reads RSLRAVASMY. The helical transmembrane segment at 88–113 threads the bilayer; that stretch reads IYVVNLALADLLYLLSIPFIVATYIT. The Extracellular segment spans residues 114-124; it reads KEWHFGDVGCR. The cysteines at positions 123 and 199 are disulfide-linked. Residues 125–146 form a helical membrane-spanning segment; sequence VLFSLDFLTMHASIFTLTVMSS. Over 147 to 167 the chain is Cytoplasmic; it reads ERYAAVLRPLDTVQRPKGYRK. A helical transmembrane segment spans residues 168–186; it reads LLALGTWLLALLLTLPVML. Residues 187 to 209 lie on the Extracellular side of the membrane; the sequence is AMRLVRRGPKSLCLPAWGPRAHR. Residues 210–232 form a helical membrane-spanning segment; the sequence is AYLTLLFATSIAGPGLLIGLLYA. Topologically, residues 233 to 258 are cytoplasmic; that stretch reads RLARAYRRSQRASFKRARRPGARALR. The chain crosses the membrane as a helical span at residues 259–284; that stretch reads LVLGIVLLFWACFLPFWLWQLLAQYR. Residues 285–297 lie on the Extracellular side of the membrane; sequence EAPLAPRTARIVN. A helical transmembrane segment spans residues 298–318; it reads YLTTCLTYGNSCANPFLYTLL. Over 319 to 389 the chain is Cytoplasmic; the sequence is TRNYRDHLRG…PALESPGDPA (71 aa). The segment at 328-366 is disordered; it reads GRVRSPGSGGVRGPVPSLQPRARFQRGSGRSLSSCSPQP. Residues 355–366 show a composition bias toward polar residues; it reads SGRSLSSCSPQP.

The protein belongs to the G-protein coupled receptor 1 family.

The protein resides in the cell membrane. Its function is as follows. High affinity receptor for urotensin-2 and urotensin-2B. The activity of this receptor is mediated by a G-protein that activate a phosphatidylinositol-calcium second messenger system. The polypeptide is Urotensin-2 receptor (UTS2R) (Macaca mulatta (Rhesus macaque)).